The chain runs to 947 residues: Serine/threonine-protein kinase PKH2 (947 aa).

Residues 1 to 14 (MHKFRYSLHQHYSK) show a composition bias toward basic residues. Disordered regions lie at residues 1-43 (MHKF…SSSS), 108-132 (SLGNTTNETGESIAKSAPGTPLSSH), and 162-212 (FNHL…NEEN). Polar residues predominate over residues 108 to 117 (SLGNTTNETG). The span at 187 to 198 (NTEEEENNDDTD) shows a compositional bias: acidic residues. Residues 199–212 (EIPKSETLKQNEEN) are compositionally biased toward basic and acidic residues. Positions 240–502 (FKFGKELGEG…IPEIQKHYFF (263 aa)) constitute a Protein kinase domain. Residues 250-252 (SYS) and K269 contribute to the ATP site. Residues 271–316 (LDKRHIIKEKKVKYVNIEKHALNRLSNRLGVISLYFTFQDKDSLYF) form a PIF-pocket region. ATP contacts are provided by residues 319–321 (DYA) and E325. The active-site Proton acceptor is D364. E368 and D382 together coordinate ATP. Low complexity-rich tracts occupy residues 550 to 579 (VKKSTNSNSNTNNVATAVGGSSSNGHKGSS) and 618 to 632 (SSTSEDSSKRSSNSN). 4 disordered regions span residues 550–598 (VKKS…STEK), 611–644 (KPATNQNSSTSEDSSKRSSNSNETRKLSYSQQDY), 660–686 (SVGSYVKTTPSKDRKTLTKVPSNIHQQ), and 794–816 (NMKRSPTSDSKKSMDIERSASTS). A compositionally biased stretch (basic and acidic residues) spans 802–811 (DSKKSMDIER).

Belongs to the protein kinase superfamily. AGC Ser/Thr protein kinase family. PDPK1 subfamily.

The protein localises to the nucleus. The protein resides in the cytoplasm. It is found in the cell cortex. The catalysed reaction is L-seryl-[protein] + ATP = O-phospho-L-seryl-[protein] + ADP + H(+). The enzyme catalyses L-threonyl-[protein] + ATP = O-phospho-L-threonyl-[protein] + ADP + H(+). In terms of biological role, serine/threonine-protein kinase which is part sphingolipid-mediated signaling pathway that is required for the internalization step of endocytosis by regulating eisosome assembly and organization, and modulating the organization of the plasma membrane. Phosphorylates and activates PKC1. Activates YPK1 and YPK2, 2 components of signaling cascade required for maintenance of cell wall integrity. Required for stress-induced P-body assembly and regulates global mRNA decay at the deadenylation step. The chain is Serine/threonine-protein kinase PKH2 from Candida albicans (strain SC5314 / ATCC MYA-2876) (Yeast).